We begin with the raw amino-acid sequence, 371 residues long: uncharacterized protein (371 aa).

8 helical membrane passes run 4-24 (LPML…FIYG), 60-82 (LIQL…ALYG), 87-109 (LWIV…MLSI), 130-150 (VFIN…FVAS), 197-217 (VVAV…LLPV), 224-244 (IYPL…YGLV), 282-302 (VPIW…GFHA), and 320-340 (FIFY…CMVG).

This sequence belongs to the peptide transporter carbon starvation (CstA) (TC 2.A.114) family.

Its subcellular location is the cell membrane. This is an uncharacterized protein from Haemophilus influenzae (strain ATCC 51907 / DSM 11121 / KW20 / Rd).